The sequence spans 136 residues: Small ribosomal subunit protein uS8 (136 aa).

Belongs to the universal ribosomal protein uS8 family. As to quaternary structure, part of the 30S ribosomal subunit. Contacts proteins S5 and S12.

Its function is as follows. One of the primary rRNA binding proteins, it binds directly to 16S rRNA central domain where it helps coordinate assembly of the platform of the 30S subunit. This chain is Small ribosomal subunit protein uS8, found in Synechococcus sp. (strain JA-2-3B'a(2-13)) (Cyanobacteria bacterium Yellowstone B-Prime).